The primary structure comprises 31 residues: Cytochrome b6-f complex subunit 6 (31 aa).

Residues 4 to 24 (ITSYFGFLLAALTITSALLIG) form a helical membrane-spanning segment.

The protein belongs to the PetL family. The 4 large subunits of the cytochrome b6-f complex are cytochrome b6, subunit IV (17 kDa polypeptide, PetD), cytochrome f and the Rieske protein, while the 4 small subunits are PetG, PetL, PetM and PetN. The complex functions as a dimer.

The protein resides in the plastid. Its subcellular location is the chloroplast thylakoid membrane. In terms of biological role, component of the cytochrome b6-f complex, which mediates electron transfer between photosystem II (PSII) and photosystem I (PSI), cyclic electron flow around PSI, and state transitions. PetL is important for photoautotrophic growth as well as for electron transfer efficiency and stability of the cytochrome b6-f complex. The polypeptide is Cytochrome b6-f complex subunit 6 (Piper cenocladum (Ant piper)).